The primary structure comprises 1333 residues: DNA-directed RNA polymerase subunit beta' (1333 aa).

Residues cysteine 60, cysteine 62, cysteine 75, and cysteine 78 each contribute to the Zn(2+) site. Aspartate 535, aspartate 537, and aspartate 539 together coordinate Mg(2+). Residues cysteine 901, cysteine 983, cysteine 990, and cysteine 993 each contribute to the Zn(2+) site.

Belongs to the RNA polymerase beta' chain family. As to quaternary structure, the RNAP catalytic core consists of 2 alpha, 1 beta, 1 beta' and 1 omega subunit. When a sigma factor is associated with the core the holoenzyme is formed, which can initiate transcription. It depends on Mg(2+) as a cofactor. The cofactor is Zn(2+).

It carries out the reaction RNA(n) + a ribonucleoside 5'-triphosphate = RNA(n+1) + diphosphate. In terms of biological role, DNA-dependent RNA polymerase catalyzes the transcription of DNA into RNA using the four ribonucleoside triphosphates as substrates. The chain is DNA-directed RNA polymerase subunit beta' from Corynebacterium efficiens (strain DSM 44549 / YS-314 / AJ 12310 / JCM 11189 / NBRC 100395).